A 349-amino-acid chain; its full sequence is Probable dual-specificity RNA methyltransferase RlmN (349 aa).

The active-site Proton acceptor is the E94. A Radical SAM core domain is found at 100–324 (YKTHTSICLS…NKNNVNTTIR (225 aa)). A disulfide bridge links C107 with C335. Residues C114, C118, and C121 each coordinate [4Fe-4S] cluster. S-adenosyl-L-methionine is bound by residues 161 to 162 (GE), S193, 216 to 218 (SLH), and N292. The S-methylcysteine intermediate role is filled by C335.

This sequence belongs to the radical SAM superfamily. RlmN family. [4Fe-4S] cluster serves as cofactor.

It localises to the cytoplasm. It catalyses the reaction adenosine(2503) in 23S rRNA + 2 reduced [2Fe-2S]-[ferredoxin] + 2 S-adenosyl-L-methionine = 2-methyladenosine(2503) in 23S rRNA + 5'-deoxyadenosine + L-methionine + 2 oxidized [2Fe-2S]-[ferredoxin] + S-adenosyl-L-homocysteine. The catalysed reaction is adenosine(37) in tRNA + 2 reduced [2Fe-2S]-[ferredoxin] + 2 S-adenosyl-L-methionine = 2-methyladenosine(37) in tRNA + 5'-deoxyadenosine + L-methionine + 2 oxidized [2Fe-2S]-[ferredoxin] + S-adenosyl-L-homocysteine. Functionally, specifically methylates position 2 of adenine 2503 in 23S rRNA and position 2 of adenine 37 in tRNAs. In Finegoldia magna (strain ATCC 29328 / DSM 20472 / WAL 2508) (Peptostreptococcus magnus), this protein is Probable dual-specificity RNA methyltransferase RlmN.